Here is a 431-residue protein sequence, read N- to C-terminus: Histidinol dehydrogenase 1 (431 aa).

The NAD(+) site is built by tyrosine 127, glutamine 188, and asparagine 211. The substrate site is built by serine 234, glutamine 256, and histidine 259. Zn(2+) contacts are provided by glutamine 256 and histidine 259. Active-site proton acceptor residues include glutamate 324 and histidine 325. Substrate-binding residues include histidine 325, aspartate 358, glutamate 412, and histidine 417. Aspartate 358 lines the Zn(2+) pocket. Zn(2+) is bound at residue histidine 417.

This sequence belongs to the histidinol dehydrogenase family. Zn(2+) is required as a cofactor.

It catalyses the reaction L-histidinol + 2 NAD(+) + H2O = L-histidine + 2 NADH + 3 H(+). It functions in the pathway amino-acid biosynthesis; L-histidine biosynthesis; L-histidine from 5-phospho-alpha-D-ribose 1-diphosphate: step 9/9. Its function is as follows. Catalyzes the sequential NAD-dependent oxidations of L-histidinol to L-histidinaldehyde and then to L-histidine. This chain is Histidinol dehydrogenase 1 (hisD1), found in Nostoc sp. (strain PCC 7120 / SAG 25.82 / UTEX 2576).